Reading from the N-terminus, the 485-residue chain is UBX domain-containing protein 11 (485 aa).

The tract at residues 1–26 (MSSPLASLSKTRKVPLESEPVNPGRR) is disordered. The stretch at 67–143 (HDSELLTSMA…VGEMERFLND (77 aa)) forms a coiled coil. In terms of domain architecture, SEP spans 224–288 (LEPIPLKLYR…VSDLRNQVYP (65 aa)). One can recognise a UBX domain in the interval 386–463 (PVPPLSMLRI…GLVPNATLLL (78 aa)). 2 positions are modified to phosphoserine: serine 479 and serine 483.

Interacts with GNA12, GNA13, RND1, RND2 and RND3. Strongly expressed in testis. Also expressed in lung, brain and thymus.

Its subcellular location is the cytoplasm. It is found in the cytoskeleton. Functionally, may be involved in the reorganization of actin cytoskeleton mediated by RND1, RND2 and RND3. Promotes RHOA activation mediated by GNA12 and GNA13. The protein is UBX domain-containing protein 11 (Ubxn11) of Rattus norvegicus (Rat).